Consider the following 328-residue polypeptide: Peroxidase 63 (328 aa).

Positions 1–27 (MAEQSQLKNLTIILLLLCLSFQSLSFA) are cleaved as a signal peptide. Disulfide bonds link Cys-41–Cys-122, Cys-74–Cys-79, Cys-128–Cys-324, and Cys-207–Cys-234. His-72 (proton acceptor) is an active-site residue. Residues Asp-73, Gly-78, Asp-80, and Ser-82 each coordinate Ca(2+). A substrate-binding site is contributed by Pro-170. His-200 contributes to the heme b binding site. Ca(2+) is bound at residue Thr-201. N-linked (GlcNAc...) asparagine glycans are attached at residues Asn-217 and Asn-218. Residues Asp-248, Thr-251, and Asp-256 each contribute to the Ca(2+) site.

The protein belongs to the peroxidase family. Classical plant (class III) peroxidase subfamily. It depends on heme b as a cofactor. The cofactor is Ca(2+).

Its subcellular location is the secreted. The enzyme catalyses 2 a phenolic donor + H2O2 = 2 a phenolic radical donor + 2 H2O. Functionally, removal of H(2)O(2), oxidation of toxic reductants, biosynthesis and degradation of lignin, suberization, auxin catabolism, response to environmental stresses such as wounding, pathogen attack and oxidative stress. These functions might be dependent on each isozyme/isoform in each plant tissue. The protein is Peroxidase 63 (PER63) of Arabidopsis thaliana (Mouse-ear cress).